A 74-amino-acid polypeptide reads, in one-letter code: MLEGAKLIGAGAATIALAGAAVGIGNVFSSLIHSVARNPSLAKQLFGYAILGFALTEAIALFALMMAFLILFVF.

The next 2 helical transmembrane spans lie at isoleucine 8 to phenylalanine 28 and isoleucine 50 to isoleucine 70.

Belongs to the ATPase C chain family. As to quaternary structure, F-type ATPases have 2 components, CF(1) - the catalytic core - and CF(0) - the membrane proton channel. CF(1) has five subunits: alpha(3), beta(3), gamma(1), delta(1), epsilon(1). CF(0) has three main subunits: a, b and c.

It localises to the mitochondrion membrane. In terms of biological role, this protein is one of the chains of the nonenzymatic membrane component (F0) of mitochondrial ATPase. The chain is ATP synthase subunit 9, mitochondrial (ATP9) from Triticum aestivum (Wheat).